Consider the following 130-residue polypeptide: Small ribosomal subunit protein uS8 (130 aa).

It belongs to the universal ribosomal protein uS8 family. Part of the 30S ribosomal subunit. Contacts proteins S5 and S12.

Functionally, one of the primary rRNA binding proteins, it binds directly to 16S rRNA central domain where it helps coordinate assembly of the platform of the 30S subunit. The protein is Small ribosomal subunit protein uS8 of Shewanella piezotolerans (strain WP3 / JCM 13877).